A 571-amino-acid chain; its full sequence is Urease subunit alpha (571 aa).

The Urease domain maps to 131-571; that stretch reads GGIDAHIHFI…LPMAQRYFLF (441 aa). Ni(2+) contacts are provided by His136, His138, and Lys219. An N6-carboxylysine modification is found at Lys219. His221 is a substrate binding site. Ni(2+)-binding residues include His248 and His274. His322 (proton donor) is an active-site residue. Asp362 provides a ligand contact to Ni(2+).

The protein belongs to the metallo-dependent hydrolases superfamily. Urease alpha subunit family. In terms of assembly, heterotrimer of UreA (gamma), UreB (beta) and UreC (alpha) subunits. Three heterotrimers associate to form the active enzyme. Ni cation serves as cofactor. Carboxylation allows a single lysine to coordinate two nickel ions.

It is found in the cytoplasm. It carries out the reaction urea + 2 H2O + H(+) = hydrogencarbonate + 2 NH4(+). The protein operates within nitrogen metabolism; urea degradation; CO(2) and NH(3) from urea (urease route): step 1/1. This is Urease subunit alpha from Nostoc punctiforme (strain ATCC 29133 / PCC 73102).